We begin with the raw amino-acid sequence, 253 residues long: Chitooligosaccharide deacetylase (253 aa).

2 residues coordinate Mg(2+): His61 and His126.

This sequence belongs to the YdjC deacetylase family. ChbG subfamily. Homodimer. Mg(2+) serves as cofactor.

Its subcellular location is the cytoplasm. The enzyme catalyses N,N'-diacetylchitobiose + H2O = N-acetyl-beta-D-glucosaminyl-(1-&gt;4)-D-glucosamine + acetate. It carries out the reaction diacetylchitobiose-6'-phosphate + H2O = N'-monoacetylchitobiose-6'-phosphate + acetate. The protein operates within glycan degradation; chitin degradation. Involved in the degradation of chitin. ChbG is essential for growth on the acetylated chitooligosaccharides chitobiose and chitotriose but is dispensable for growth on cellobiose and chitosan dimer, the deacetylated form of chitobiose. Deacetylation of chitobiose-6-P and chitotriose-6-P is necessary for both the activation of the chb promoter by the regulatory protein ChbR and the hydrolysis of phosphorylated beta-glucosides by the phospho-beta-glucosidase ChbF. Catalyzes the removal of only one acetyl group from chitobiose-6-P to yield monoacetylchitobiose-6-P, the inducer of ChbR and the substrate of ChbF. In Yersinia pestis bv. Antiqua (strain Angola), this protein is Chitooligosaccharide deacetylase.